Here is a 45-residue protein sequence, read N- to C-terminus: PAAGLSDPKIGNGCFGFPIDRIGSVSGLGCNRLVQNPPKPISGES.

Positions 1-5 (PAAGL) are excised as a propeptide. Residues C14 and C30 are joined by a disulfide bond.

The protein belongs to the natriuretic peptide family. In terms of tissue distribution, expressed by the venom gland.

Its subcellular location is the secreted. Functionally, snake venom natriuretic peptide that targets both NPR1 and NPR2. Exhibits hypotensive and vasodepressor activities. This chain is Natriuretic peptide OsNP-d, found in Oxyuranus scutellatus scutellatus (Australian taipan).